Consider the following 78-residue polypeptide: Putative capsid protein ORF9 (78 aa).

The N-terminal stretch at 1-29 (MIKLVLLVAAIAIFGTGFITVIINQFTSA) is a signal peptide. A helical membrane pass occupies residues 52 to 72 (VLFSHPLMLTISSLYIVGFIV).

It belongs to the plectrovirus ORF9 family. In terms of assembly, homomultimerizes.

It localises to the virion. Its subcellular location is the host membrane. In terms of biological role, may self assemble to form a helical capsid wrapping up the viral genomic DNA. The virion assembly and budding take place at the host inner membrane. This is Putative capsid protein ORF9 from Spiroplasma virus SpV1-C74 (SpV1).